Reading from the N-terminus, the 513-residue chain is Maturase K (513 aa).

This sequence belongs to the intron maturase 2 family. MatK subfamily.

The protein resides in the plastid. It is found in the chloroplast. Usually encoded in the trnK tRNA gene intron. Probably assists in splicing its own and other chloroplast group II introns. The sequence is that of Maturase K from Arundo donax (Giant reed).